We begin with the raw amino-acid sequence, 50 residues long: MPQRTFLMMLIVVCVTILCFVWMVRDSLCGFRIEQGNTVLVATLAYEVKR.

A helical transmembrane segment spans residues 5 to 25 (TFLMMLIVVCVTILCFVWMVR).

It belongs to the Hok/Gef family.

It is found in the cell inner membrane. When overexpressed kill the cells from the inside by interfering with a vital function in the cell membrane. In terms of biological role, toxic component of a type I toxin-antitoxin (TA) system. When expressed is involved in cellular Mg(2+) release and degradation of stable RNA. This is Protein PndA (pndA) from Escherichia coli.